Consider the following 251-residue polypeptide: 4-hydroxy-tetrahydrodipicolinate reductase (251 aa).

Glycine 8 to methionine 13 lines the NAD(+) pocket. Residue arginine 36 coordinates NADP(+). NAD(+)-binding positions include glycine 89–threonine 91 and threonine 113–phenylalanine 116. Histidine 145 (proton donor/acceptor) is an active-site residue. Position 146 (histidine 146) interacts with (S)-2,3,4,5-tetrahydrodipicolinate. Lysine 149 functions as the Proton donor in the catalytic mechanism. Residue glycine 155–threonine 156 coordinates (S)-2,3,4,5-tetrahydrodipicolinate.

This sequence belongs to the DapB family.

It localises to the cytoplasm. The catalysed reaction is (S)-2,3,4,5-tetrahydrodipicolinate + NAD(+) + H2O = (2S,4S)-4-hydroxy-2,3,4,5-tetrahydrodipicolinate + NADH + H(+). The enzyme catalyses (S)-2,3,4,5-tetrahydrodipicolinate + NADP(+) + H2O = (2S,4S)-4-hydroxy-2,3,4,5-tetrahydrodipicolinate + NADPH + H(+). It functions in the pathway amino-acid biosynthesis; L-lysine biosynthesis via DAP pathway; (S)-tetrahydrodipicolinate from L-aspartate: step 4/4. Catalyzes the conversion of 4-hydroxy-tetrahydrodipicolinate (HTPA) to tetrahydrodipicolinate. The polypeptide is 4-hydroxy-tetrahydrodipicolinate reductase (Methanocorpusculum labreanum (strain ATCC 43576 / DSM 4855 / Z)).